Consider the following 449-residue polypeptide: Bifunctional protein GlmU (449 aa).

The interval 1 to 230 (MASSKLAVIV…EAELLGVNAR (230 aa)) is pyrophosphorylase. Residues 11–14 (LAAG), lysine 25, glutamine 74, 79–80 (GT), 102–104 (YGD), glycine 142, glutamate 156, asparagine 171, and asparagine 228 contribute to the UDP-N-acetyl-alpha-D-glucosamine site. Aspartate 104 is a binding site for Mg(2+). Asparagine 228 serves as a coordination point for Mg(2+). Residues 231–251 (SELAVAEALVQARLREAAMDN) form a linker region. The segment at 252–449 (GATLIDPATV…QQAAKKAKKD (198 aa)) is N-acetyltransferase. Arginine 317 and lysine 335 together coordinate UDP-N-acetyl-alpha-D-glucosamine. The active-site Proton acceptor is the histidine 347. UDP-N-acetyl-alpha-D-glucosamine contacts are provided by tyrosine 350 and asparagine 361. Residues alanine 364, 370-371 (NY), serine 389, alanine 407, and arginine 424 each bind acetyl-CoA.

This sequence in the N-terminal section; belongs to the N-acetylglucosamine-1-phosphate uridyltransferase family. It in the C-terminal section; belongs to the transferase hexapeptide repeat family. Homotrimer. The cofactor is Mg(2+).

Its subcellular location is the cytoplasm. It catalyses the reaction alpha-D-glucosamine 1-phosphate + acetyl-CoA = N-acetyl-alpha-D-glucosamine 1-phosphate + CoA + H(+). It carries out the reaction N-acetyl-alpha-D-glucosamine 1-phosphate + UTP + H(+) = UDP-N-acetyl-alpha-D-glucosamine + diphosphate. It participates in nucleotide-sugar biosynthesis; UDP-N-acetyl-alpha-D-glucosamine biosynthesis; N-acetyl-alpha-D-glucosamine 1-phosphate from alpha-D-glucosamine 6-phosphate (route II): step 2/2. The protein operates within nucleotide-sugar biosynthesis; UDP-N-acetyl-alpha-D-glucosamine biosynthesis; UDP-N-acetyl-alpha-D-glucosamine from N-acetyl-alpha-D-glucosamine 1-phosphate: step 1/1. It functions in the pathway bacterial outer membrane biogenesis; LPS lipid A biosynthesis. Functionally, catalyzes the last two sequential reactions in the de novo biosynthetic pathway for UDP-N-acetylglucosamine (UDP-GlcNAc). The C-terminal domain catalyzes the transfer of acetyl group from acetyl coenzyme A to glucosamine-1-phosphate (GlcN-1-P) to produce N-acetylglucosamine-1-phosphate (GlcNAc-1-P), which is converted into UDP-GlcNAc by the transfer of uridine 5-monophosphate (from uridine 5-triphosphate), a reaction catalyzed by the N-terminal domain. This Paramagnetospirillum magneticum (strain ATCC 700264 / AMB-1) (Magnetospirillum magneticum) protein is Bifunctional protein GlmU.